We begin with the raw amino-acid sequence, 351 residues long: MKLQWWQGPCQPLDHVARTKAESRQQQLTKPAGSLGRLEKLAIHLAALQGRERPSLDKLWIAIFAGDHGVVAEGVSAYPQAVTGQMLANFVSGGAAISVLARELDAALEVIDLGTAEPLPPLPGVRHLYVGAGTQNLAREPAMTLSQLLICLEAGRDSLLRARAVGCDLFVGGEMGIGNTTAAAALACWLLGCPASELAGPGTGLDGAGVAHKARVIDAALALHHAQIDGPLQALVHLGGFEIAALTGAYLAAAQQGIAVLVDGFICSVAALLAVRLNPGCRDWLLFAHHGAEPGHVRVLQALGAEPLLELGLRLGEGSGAALAVPLLRLACSLHGQMATFAEAAVAQRPQ.

The active-site Proton acceptor is the glutamate 317.

This sequence belongs to the CobT family.

The catalysed reaction is 5,6-dimethylbenzimidazole + nicotinate beta-D-ribonucleotide = alpha-ribazole 5'-phosphate + nicotinate + H(+). Its pathway is nucleoside biosynthesis; alpha-ribazole biosynthesis; alpha-ribazole from 5,6-dimethylbenzimidazole: step 1/2. Functionally, catalyzes the synthesis of alpha-ribazole-5'-phosphate from nicotinate mononucleotide (NAMN) and 5,6-dimethylbenzimidazole (DMB). This Ectopseudomonas mendocina (strain ymp) (Pseudomonas mendocina) protein is Nicotinate-nucleotide--dimethylbenzimidazole phosphoribosyltransferase.